Consider the following 274-residue polypeptide: Bis(5'-nucleosyl)-tetraphosphatase, symmetrical (274 aa).

It belongs to the Ap4A hydrolase family.

The enzyme catalyses P(1),P(4)-bis(5'-adenosyl) tetraphosphate + H2O = 2 ADP + 2 H(+). Its function is as follows. Hydrolyzes diadenosine 5',5'''-P1,P4-tetraphosphate to yield ADP. This chain is Bis(5'-nucleosyl)-tetraphosphatase, symmetrical, found in Shewanella oneidensis (strain ATCC 700550 / JCM 31522 / CIP 106686 / LMG 19005 / NCIMB 14063 / MR-1).